A 291-amino-acid chain; its full sequence is Small ribosomal subunit biogenesis GTPase RsgA (291 aa).

Positions 63 to 221 (QNELKRPPVS…VADTPGFSAL (159 aa)) constitute a CP-type G domain. Residues 112–115 (TKKD) and 164–172 (GQSGVGKST) each bind GTP. Residues Cys245, Cys250, His252, and Cys258 each contribute to the Zn(2+) site.

Belongs to the TRAFAC class YlqF/YawG GTPase family. RsgA subfamily. Monomer. Associates with 30S ribosomal subunit, binds 16S rRNA. Zn(2+) is required as a cofactor.

Its subcellular location is the cytoplasm. In terms of biological role, one of several proteins that assist in the late maturation steps of the functional core of the 30S ribosomal subunit. Helps release RbfA from mature subunits. May play a role in the assembly of ribosomal proteins into the subunit. Circularly permuted GTPase that catalyzes slow GTP hydrolysis, GTPase activity is stimulated by the 30S ribosomal subunit. This is Small ribosomal subunit biogenesis GTPase RsgA from Staphylococcus carnosus (strain TM300).